The following is a 1410-amino-acid chain: ABC transporter C family member 13 (1410 aa).

A run of 8 helical transmembrane segments spans residues 23–43 (IVLGFGANVVTLLLILILTIT), 60–80 (LLYVTPALGACLSCVDLVLLV), 88–108 (VILCFVPLSGFVMWIAVILSL), 122–142 (ILCFWWIFRFLTDALHLNMIF), 148–168 (QEICLIMLDIAFGISINVLRI), 391–411 (LSGLAITILLIPVNKWISVLI), 474–494 (VFFWATTPTLFSLCTFGLFAL), and 505–525 (FTCLALFNSLISPLNSFPWVI). The 276-residue stretch at 255–530 (CNNYSTPSLI…FPWVINGLID (276 aa)) folds into the ABC transmembrane type-1 1 domain. Positions 564 to 791 (VCVEDASCTW…ISPTFSLTNE (228 aa)) constitute an ABC transporter 1 domain. 602 to 609 (GEVGSGKT) is a binding site for ATP. Helical transmembrane passes span 844–864 (AVFSGWFITIVILVSAVLMQG), 889–909 (TSFYLMVLCIFCIINSILTLV), 963–985 (SLPFILNILLANFVGLLGIIVVL), 990–1009 (VLFLLLLLPFWYIYSKLQVF), 1087–1107 (IVLFVAVMAVLGSGGNFPISF), and 1111–1131 (GLVGLALSYAAPLVSLLGSLL). Residues 852–1139 (TIVILVSAVL…LLTSFTETEK (288 aa)) form the ABC transmembrane type-1 2 domain. Residues 1174–1407 (VEFHNVTMRY…DSSTFSSFVR (234 aa)) enclose the ABC transporter 2 domain. An ATP-binding site is contributed by 1208-1215 (GRTGAGKS).

The protein belongs to the ABC transporter superfamily. ABCC family. Conjugate transporter (TC 3.A.1.208) subfamily. Ubiquitous.

The protein localises to the membrane. It carries out the reaction ATP + H2O + xenobioticSide 1 = ADP + phosphate + xenobioticSide 2.. Pump for glutathione S-conjugates. The protein is ABC transporter C family member 13 (ABCC13) of Arabidopsis thaliana (Mouse-ear cress).